A 244-amino-acid chain; its full sequence is Thaumatin-like protein 1 (244 aa).

An N-terminal signal peptide occupies residues 1–22; sequence MKFEALIGLVLVFLSEHAGVYS. 8 disulfide bridges follow: C31/C243, C79/C89, C94/C101, C149/C232, C154/C215, C162/C178, C182/C191, and C192/C202. Residue N150 is glycosylated (N-linked (GlcNAc...) asparagine).

It belongs to the thaumatin family. In terms of processing, N-glycosylated. Style.

It is found in the secreted. The chain is Thaumatin-like protein 1 (TL1) from Pyrus pyrifolia (Chinese pear).